We begin with the raw amino-acid sequence, 284 residues long: NAD kinase (284 aa).

Catalysis depends on Asp-61, which acts as the Proton acceptor. Residues 61 to 62, Arg-66, 136 to 137, Arg-147, Lys-164, Asp-166, and Leu-201 each bind NAD(+); these read DG and ND.

It belongs to the NAD kinase family. It depends on a divalent metal cation as a cofactor.

It is found in the cytoplasm. It carries out the reaction NAD(+) + ATP = ADP + NADP(+) + H(+). Functionally, involved in the regulation of the intracellular balance of NAD and NADP, and is a key enzyme in the biosynthesis of NADP. Catalyzes specifically the phosphorylation on 2'-hydroxyl of the adenosine moiety of NAD to yield NADP. This is NAD kinase from Dehalococcoides mccartyi (strain CBDB1).